The chain runs to 136 residues: S-protein homolog 17 (136 aa).

Positions 1–22 (MKNLSIFMFVFSLCMFGHVSRA) are cleaved as a signal peptide.

The protein belongs to the plant self-incompatibility (S1) protein family.

It localises to the secreted. This is S-protein homolog 17 from Arabidopsis thaliana (Mouse-ear cress).